Reading from the N-terminus, the 342-residue chain is S-adenosylmethionine:tRNA ribosyltransferase-isomerase (342 aa).

It belongs to the QueA family. In terms of assembly, monomer.

The protein resides in the cytoplasm. The catalysed reaction is 7-aminomethyl-7-carbaguanosine(34) in tRNA + S-adenosyl-L-methionine = epoxyqueuosine(34) in tRNA + adenine + L-methionine + 2 H(+). The protein operates within tRNA modification; tRNA-queuosine biosynthesis. Transfers and isomerizes the ribose moiety from AdoMet to the 7-aminomethyl group of 7-deazaguanine (preQ1-tRNA) to give epoxyqueuosine (oQ-tRNA). This is S-adenosylmethionine:tRNA ribosyltransferase-isomerase from Streptococcus pyogenes serotype M3 (strain ATCC BAA-595 / MGAS315).